A 98-amino-acid chain; its full sequence is Ig heavy chain V region 6.96 (98 aa).

The Ig-like domain maps to 1-98 (EVQLVESGGG…EDTAMYYCAR (98 aa)).

In Mus musculus (Mouse), this protein is Ig heavy chain V region 6.96.